The following is a 360-amino-acid chain: Glyceraldehyde-3-phosphate dehydrogenase (360 aa).

NAD(+) contacts are provided by residues Arg13 to Ile14, Asp35, and Arg82. D-glyceraldehyde 3-phosphate-binding positions include Ser153–Thr155, Thr184, Thr213–Gly214, and Arg236. Cys154 (nucleophile) is an active-site residue. Asn318 serves as a coordination point for NAD(+).

The protein belongs to the glyceraldehyde-3-phosphate dehydrogenase family. As to quaternary structure, homotetramer.

The catalysed reaction is D-glyceraldehyde 3-phosphate + phosphate + NAD(+) = (2R)-3-phospho-glyceroyl phosphate + NADH + H(+). It functions in the pathway carbohydrate degradation; glycolysis; pyruvate from D-glyceraldehyde 3-phosphate: step 1/5. In terms of biological role, key enzyme in glycolysis that catalyzes the first step of the pathway by converting D-glyceraldehyde 3-phosphate (G3P) into 3-phospho-D-glyceroyl phosphate. Essential for the maintenance of cellular ATP levels and carbohydrate metabolism. The chain is Glyceraldehyde-3-phosphate dehydrogenase from Atriplex nummularia (Old man saltbush).